Here is a 178-residue protein sequence, read N- to C-terminus: Inorganic pyrophosphatase (178 aa).

Positions 30, 44, and 56 each coordinate substrate. Aspartate 66, aspartate 71, and aspartate 103 together coordinate Mg(2+). Tyrosine 142 contributes to the substrate binding site.

This sequence belongs to the PPase family. Homohexamer. It depends on Mg(2+) as a cofactor.

The protein localises to the cytoplasm. It catalyses the reaction diphosphate + H2O = 2 phosphate + H(+). Catalyzes the hydrolysis of inorganic pyrophosphate (PPi) forming two phosphate ions. This Xanthomonas campestris pv. campestris (strain ATCC 33913 / DSM 3586 / NCPPB 528 / LMG 568 / P 25) protein is Inorganic pyrophosphatase.